Consider the following 513-residue polypeptide: Cytochrome P450 monooxygenase asaD (513 aa).

A helical membrane pass occupies residues 14–34; the sequence is ILYPFLFGIFAVASLCIATLL. N-linked (GlcNAc...) asparagine glycans are attached at residues Asn-258, Asn-370, Asn-431, and Asn-441. Cys-461 is a binding site for heme.

The protein belongs to the cytochrome P450 family. The cofactor is heme.

It is found in the membrane. Its pathway is secondary metabolite biosynthesis. In terms of biological role, cytochrome P450 monooxygenase; part of the gene cluster that mediates the biosynthesis of aspergillic acid, a hydroxamic acid-containing pyrazinone with aliphatic side chains that originates from leucine (Leu) and isoleucine (Ile). Aspergillic acid has antibiotic properties and was shown to be lethal to mice. The first step in the pathway is the production of deoxyaspergillic acid via a condensation between the Ile amine and the Leu carboxylic acid, followed by a reductive release from the protein forming the dipeptide aldehyde NH(2)-Leu-Ile-CHO, which could undergo an intermolecular cyclization resulting in a dihydropyrazinone. As the NRPS asaC lacks a condensation domain, it is improbable that it is responsible for condensation of Leu and Ile. One possibility is that asaC acts on a previously condensed dipeptide and functions as a Leu-Ile reductase to yield deoxyaspergillic acid. After asaC forms deoxyaspergillic acid, the cytochrome P450 asaD oxidizes the pyrazinone to the hydroxamic acid-containing bioactive metabolite aspergillic acid. The hydroxylase/desaturase asaB can then convert aspergillic acid to hydroxyaspergillic acid. Both aspergillic acid and hydroxyaspergillic acid can form complexes with iron producing ferriaspergillin analogs. This Aspergillus flavus (strain ATCC 200026 / FGSC A1120 / IAM 13836 / NRRL 3357 / JCM 12722 / SRRC 167) protein is Cytochrome P450 monooxygenase asaD.